A 122-amino-acid chain; its full sequence is Small ribosomal subunit protein uS13c (122 aa).

The interval 102–122 (RTRTNARTRRGAKKTVAGKKK) is disordered.

This sequence belongs to the universal ribosomal protein uS13 family. Part of the 30S ribosomal subunit.

It is found in the plastid. It localises to the chloroplast. In terms of biological role, located at the top of the head of the 30S subunit, it contacts several helices of the 16S rRNA. The protein is Small ribosomal subunit protein uS13c of Guillardia theta (Cryptophyte).